We begin with the raw amino-acid sequence, 627 residues long: Membrane protein insertase YidC (627 aa).

The next 6 membrane-spanning stretches (helical) occupy residues lysine 3–asparagine 23, tryptophan 376–tyrosine 396, leucine 450–isoleucine 470, phenylalanine 502–isoleucine 522, glutamate 534–phenylalanine 554, and alanine 558–serine 578.

Belongs to the OXA1/ALB3/YidC family. Type 1 subfamily. Interacts with the Sec translocase complex via SecD. Specifically interacts with transmembrane segments of nascent integral membrane proteins during membrane integration.

The protein resides in the cell inner membrane. In terms of biological role, required for the insertion and/or proper folding and/or complex formation of integral membrane proteins into the membrane. Involved in integration of membrane proteins that insert both dependently and independently of the Sec translocase complex, as well as at least some lipoproteins. Aids folding of multispanning membrane proteins. This chain is Membrane protein insertase YidC, found in Porphyromonas gingivalis (strain ATCC BAA-308 / W83).